A 151-amino-acid chain; its full sequence is Small ribosomal subunit protein uS15 (151 aa).

It belongs to the universal ribosomal protein uS15 family. Component of the small ribosomal subunit.

The protein localises to the cytoplasm. Component of the small ribosomal subunit. The ribosome is a large ribonucleoprotein complex responsible for the synthesis of proteins in the cell. The chain is Small ribosomal subunit protein uS15 (rps13) from Gillichthys mirabilis (Long-jawed mudsucker).